The sequence spans 236 residues: Purine nucleoside phosphorylase DeoD-type (236 aa).

H5 serves as a coordination point for a purine D-ribonucleoside. Phosphate-binding positions include G21, R25, R44, and 88-91 (RVGT). Residues 180–182 (EME) and 204–205 (SD) contribute to the a purine D-ribonucleoside site. Catalysis depends on D205, which acts as the Proton donor.

This sequence belongs to the PNP/UDP phosphorylase family. Homohexamer; trimer of homodimers.

The enzyme catalyses a purine D-ribonucleoside + phosphate = a purine nucleobase + alpha-D-ribose 1-phosphate. It carries out the reaction a purine 2'-deoxy-D-ribonucleoside + phosphate = a purine nucleobase + 2-deoxy-alpha-D-ribose 1-phosphate. In terms of biological role, catalyzes the reversible phosphorolytic breakdown of the N-glycosidic bond in the beta-(deoxy)ribonucleoside molecules, with the formation of the corresponding free purine bases and pentose-1-phosphate. The polypeptide is Purine nucleoside phosphorylase DeoD-type (Shewanella denitrificans (strain OS217 / ATCC BAA-1090 / DSM 15013)).